The primary structure comprises 647 residues: Zinc finger CCCH domain-containing protein 19 (647 aa).

2 C3H1-type zinc fingers span residues 16-45 (RRRS…HSDA) and 47-73 (RMNP…HPPL). A disordered region spans residues 78-106 (GAPTTPRTSQQSAPQVSVPAQAPVPNPAS). Residues 86–106 (SQQSAPQVSVPAQAPVPNPAS) are compositionally biased toward low complexity. The C3H1-type 3 zinc finger occupies 109–136 (AKQGVPCYYFQKGMCVKGDRCAFLHLPQ). 5 disordered regions span residues 155–280 (VPHP…RTNG), 308–327 (LSES…DSSD), 335–452 (QRRL…DAES), 512–580 (LKRK…LSPA), and 586–605 (EAAD…ETAE). 2 stretches are compositionally biased toward polar residues: residues 160 to 175 (LKNS…QQNA) and 189 to 203 (NGKT…NRAG). Residues 267 to 280 (SLREDRGAYRRTNG) are compositionally biased toward basic and acidic residues. Residues 347 to 359 (SDRHNVYPEDERH) show a composition bias toward basic and acidic residues. The span at 369-379 (QASNDGVSSSR) shows a compositional bias: polar residues. The segment covering 419–433 (LRGKLHDRLKAKPNE) has biased composition (basic and acidic residues). The span at 435–445 (VSGNVQSSLSK) shows a compositional bias: polar residues. Residues 527–536 (GSKREEHSGG) are compositionally biased toward basic and acidic residues.

This chain is Zinc finger CCCH domain-containing protein 19, found in Oryza sativa subsp. japonica (Rice).